Reading from the N-terminus, the 721-residue chain is Polyribonucleotide nucleotidyltransferase (721 aa).

Residues Asp-495 and Asp-501 each contribute to the Mg(2+) site. A KH domain is found at 562-621; it reads PRLLSFRIDPELIGTVIGPGGRTIKNITERTNTKIDIEDSGIVTIASHDGAAAEEAQKII. In terms of domain architecture, S1 motif spans 631–699; the sequence is GEVFTGSITR…NRGRINLTLR (69 aa). The segment at 700–721 is disordered; the sequence is GVPQSGESADSQPAPTPVAPLS.

It belongs to the polyribonucleotide nucleotidyltransferase family. Requires Mg(2+) as cofactor.

It is found in the cytoplasm. The catalysed reaction is RNA(n+1) + phosphate = RNA(n) + a ribonucleoside 5'-diphosphate. Involved in mRNA degradation. Catalyzes the phosphorolysis of single-stranded polyribonucleotides processively in the 3'- to 5'-direction. The sequence is that of Polyribonucleotide nucleotidyltransferase from Synechococcus sp. (strain CC9311).